The sequence spans 508 residues: Drug efflux pump JefA (508 aa).

Transmembrane regions (helical) follow at residues 9-29 (VLAT…VNVA), 46-66 (WAVA…ALLG), 75-95 (FVFG…PVSL), 104-124 (IQGL…SHSF), 136-156 (NWMA…GLMV), 163-183 (SVFL…LVGV), 194-214 (LDWV…YTII), 222-242 (QSAG…WLFV), 265-285 (SVLI…MVIT), 297-317 (LHAG…SLLA), 328-348 (LPVL…AISM), 354-374 (VALV…TPLL), 399-419 (LGGI…LGAA), and 479-499 (GIKL…VLGW).

This sequence belongs to the major facilitator superfamily.

The protein resides in the cell inner membrane. Functionally, involved in resistance to ethambutol and isoniazid. The protein is Drug efflux pump JefA of Mycobacterium tuberculosis (strain CDC 1551 / Oshkosh).